We begin with the raw amino-acid sequence, 386 residues long: MAP kinase-activated protein kinase 2 (386 aa).

The tract at residues 1 to 29 (MLSGSPGQTPPAPFPSPPPPAPAQPPPPF) is disordered. Residues 8-29 (QTPPAPFPSPPPPAPAQPPPPF) are compositionally biased toward pro residues. Residues 50-311 (KVTSQVLGLG…ITEFMNHPWI (262 aa)) form the Protein kinase domain. ATP contacts are provided by residues 56–64 (LGLGINGKV) and Lys79. Residue 125-127 (ECL) coordinates staurosporine. Residue Asp172 is the Proton acceptor of the active site. Position 208 is a phosphothreonine; by MAPK14 (Thr208). Ser258 carries the phosphoserine; by MAPK14 modification. Position 314 is a phosphoserine; by autocatalysis (Ser314). Residues 314-350 (STKVPQTPLHTSRVLKEDKERWEDVKEEMTSALATMR) form an autoinhibitory helix region. Thr320 is modified (phosphothreonine; by MAPK14). Short sequence motifs (nuclear export signal (NES)) lie at residues 331 to 354 (DKER…VDYE) and 342 to 351 (MTSALATMRV). Residue Lys339 forms a Glycyl lysine isopeptide (Lys-Gly) (interchain with G-Cter in SUMO) linkage. A p38 MAPK-binding site region spans residues 352–376 (DYEQIKIKKIEDASNPLLLKRRKKA). 2 short sequence motifs (bipartite nuclear localization signal) span residues 357 to 360 (KIKK) and 371 to 375 (KRRKK).

The protein belongs to the protein kinase superfamily. CAMK Ser/Thr protein kinase family. In terms of assembly, heterodimer with p38-alpha/MAPK14; this heterodimer forms a stable complex: molecules are positioned 'face to face' so that the ATP-binding sites of both kinases are at the heterodimer interface. Interacts with PHC2. Interacts with HSF1. Post-translationally, sumoylation inhibits the protein kinase activity. Phosphorylated and activated by MAP kinase p38-alpha/MAPK14 at Thr-208; Ser-258 and Thr-320. In terms of tissue distribution, ubiquitously expressed (at protein level).

The protein localises to the cytoplasm. The protein resides in the nucleus. It carries out the reaction L-seryl-[protein] + ATP = O-phospho-L-seryl-[protein] + ADP + H(+). The enzyme catalyses L-threonyl-[protein] + ATP = O-phospho-L-threonyl-[protein] + ADP + H(+). With respect to regulation, activated following phosphorylation by p38-alpha/MAPK14 following various stresses. Inhibited following sumoylation. Specifically inhibited by pyrrolopyridine inhibitors. Its function is as follows. Stress-activated serine/threonine-protein kinase involved in cytokine production, endocytosis, reorganization of the cytoskeleton, cell migration, cell cycle control, chromatin remodeling, DNA damage response and transcriptional regulation. Following stress, it is phosphorylated and activated by MAP kinase p38-alpha/MAPK14, leading to phosphorylation of substrates. Phosphorylates serine in the peptide sequence, Hyd-X-R-X(2)-S, where Hyd is a large hydrophobic residue. Phosphorylates ALOX5, CDC25B, CDC25C, CEP131, ELAVL1, HNRNPA0, HSP27/HSPB1, KRT18, KRT20, LIMK1, LSP1, PABPC1, PARN, PDE4A, RCSD1, RPS6KA3, TAB3 and TTP/ZFP36. Phosphorylates HSF1; leading to the interaction with HSP90 proteins and inhibiting HSF1 homotrimerization, DNA-binding and transactivation activities. Mediates phosphorylation of HSP27/HSPB1 in response to stress, leading to dissociation of HSP27/HSPB1 from large small heat-shock protein (sHsps) oligomers and impairment of their chaperone activities and ability to protect against oxidative stress effectively. Involved in inflammatory response by regulating tumor necrosis factor (TNF) and IL6 production post-transcriptionally: acts by phosphorylating AU-rich elements (AREs)-binding proteins ELAVL1, HNRNPA0, PABPC1 and TTP/ZFP36, leading to regulation of the stability and translation of TNF and IL6 mRNAs. Phosphorylation of TTP/ZFP36, a major post-transcriptional regulator of TNF, promotes its binding to 14-3-3 proteins and reduces its ARE mRNA affinity leading to inhibition of dependent degradation of ARE-containing transcripts. Phosphorylates CEP131 in response to cellular stress following ultraviolet irradiation which promotes binding of CEP131 to 14-3-3 proteins and inhibits formation of novel centriolar satellites. Also involved in late G2/M checkpoint following DNA damage through a process of post-transcriptional mRNA stabilization: following DNA damage, relocalizes from nucleus to cytoplasm and phosphorylates HNRNPA0 and PARN, leading to stabilization of GADD45A mRNA. Involved in toll-like receptor signaling pathway (TLR) in dendritic cells: required for acute TLR-induced macropinocytosis by phosphorylating and activating RPS6KA3. This is MAP kinase-activated protein kinase 2 (Mapkapk2) from Mus musculus (Mouse).